Consider the following 100-residue polypeptide: Small ribosomal subunit protein bS20 (100 aa).

The interval 79 to 100 (AAHQKSRLSAAVKQAIEPAPST) is disordered.

This sequence belongs to the bacterial ribosomal protein bS20 family.

Its function is as follows. Binds directly to 16S ribosomal RNA. The polypeptide is Small ribosomal subunit protein bS20 (Prochlorococcus marinus (strain MIT 9303)).